The primary structure comprises 331 residues: Serine racemase (331 aa).

Residues S34 and K54 each contribute to the ATP site. The active-site Proton acceptor is the K59. K59 is subject to N6-(pyridoxal phosphate)lysine. T81 is a Ca(2+) binding site. S84 functions as the Proton acceptor in the catalytic mechanism. N86 lines the pyridoxal 5'-phosphate pocket. Y121 serves as a coordination point for ATP. D178 contributes to the Mg(2+) binding site. The pyridoxal 5'-phosphate site is built by G186, G187, and G188. The Ca(2+) site is built by E210, A214, and D216. 3 residues coordinate Mg(2+): E210, A214, and D216. 3 residues coordinate Mn(2+): E210, A214, and D216. Residue K278 coordinates ATP. S314 lines the pyridoxal 5'-phosphate pocket. N317 contributes to the ATP binding site.

The protein belongs to the serine/threonine dehydratase family. Homodimer. It depends on Mg(2+) as a cofactor. The cofactor is Mn(2+). Ca(2+) serves as cofactor. Pyridoxal 5'-phosphate is required as a cofactor. As to expression, expressed in the whole plant.

It carries out the reaction L-serine = D-serine. It catalyses the reaction L-serine = pyruvate + NH4(+). The enzyme catalyses D-serine = pyruvate + NH4(+). With respect to regulation, inhibited by hydroxylamine. Racemase activity is enhanced by Ca(2+), Mg(2+), Mn(2+), and is decreased by Ni(2+), Zn(2+). Hydratase activity is enhanced by Ca(2+), Mg(2+), Mn(2+), Cu(2+), Fe(2+), Ni(2+). Functionally, catalyzes the synthesis of D-serine from L-serine. Has dehydratase activity towards both L-serine and D-serine. Displays high substrate specificity for L-serine, whereas L-alanine, L-arginine, and L-glutamine were poor substrates. The chain is Serine racemase (SR) from Arabidopsis thaliana (Mouse-ear cress).